The chain runs to 210 residues: Peptidyl-tRNA hydrolase (210 aa).

Y14 contacts tRNA. The active-site Proton acceptor is the H19. 3 residues coordinate tRNA: F64, N66, and N112.

It belongs to the PTH family. As to quaternary structure, monomer.

The protein localises to the cytoplasm. It catalyses the reaction an N-acyl-L-alpha-aminoacyl-tRNA + H2O = an N-acyl-L-amino acid + a tRNA + H(+). Hydrolyzes ribosome-free peptidyl-tRNAs (with 1 or more amino acids incorporated), which drop off the ribosome during protein synthesis, or as a result of ribosome stalling. In terms of biological role, catalyzes the release of premature peptidyl moieties from peptidyl-tRNA molecules trapped in stalled 50S ribosomal subunits, and thus maintains levels of free tRNAs and 50S ribosomes. This Methylorubrum extorquens (strain CM4 / NCIMB 13688) (Methylobacterium extorquens) protein is Peptidyl-tRNA hydrolase.